We begin with the raw amino-acid sequence, 305 residues long: Protoheme IX farnesyltransferase (305 aa).

The next 9 membrane-spanning stretches (helical) occupy residues 31–51, 52–72, 102–119, 123–145, 151–171, 179–199, 225–245, 247–267, and 284–304; these read VMSLVIFTGFVGIWLAPYSVH, PFIAGIAVVCIALGAGSAGAI, ALSFGLITGFFAVFFMAL, LLASFLLLFTIFYYICIYTIWLK, NIVIGGVSGALPPVIGYAAVS, IILFLIIFIWTPPHSWALALF, ILIYSILLFIVSLMPFFIGMN, FIYLITSGILGLVFLYYSGSL, and SIFYLFFIFLLLSSTSTISLI.

It belongs to the UbiA prenyltransferase family. Protoheme IX farnesyltransferase subfamily.

It localises to the cell inner membrane. The catalysed reaction is heme b + (2E,6E)-farnesyl diphosphate + H2O = Fe(II)-heme o + diphosphate. It functions in the pathway porphyrin-containing compound metabolism; heme O biosynthesis; heme O from protoheme: step 1/1. In terms of biological role, converts heme B (protoheme IX) to heme O by substitution of the vinyl group on carbon 2 of heme B porphyrin ring with a hydroxyethyl farnesyl side group. This is Protoheme IX farnesyltransferase from Rickettsia felis (strain ATCC VR-1525 / URRWXCal2) (Rickettsia azadi).